The chain runs to 153 residues: MKHPLPHYSPILFIYCFCMLQIPSSGASPPLADSPDGLDIVDPERLAYFLKQREIHSNQPKENQDVYKRFLFHYSRTRKPTHPVSAEFAPVHPLMRLAAKLASRRMKRLPRLLRLDSRMATVDFPKKDPTTSLGRPFFLFRPRNGRYTDNNFQ.

The first 26 residues, 1-26, serve as a signal peptide directing secretion; the sequence is MKHPLPHYSPILFIYCFCMLQIPSSG. 3 consecutive propeptides follow at residues 27 to 69, 70 to 105, and 106 to 108; these read ASPP…VYKR, FLFH…ASRR, and MKR. Asparagine amide is present on Asn144. The propeptide occupies 147–153; sequence YTDNNFQ.

Belongs to the NmU family.

It localises to the secreted. Functionally, implicated in the regulation of circadian rhythms through autocrine and/or paracrine actions. The sequence is that of Neuromedin-S (Nms) from Mus musculus (Mouse).